We begin with the raw amino-acid sequence, 172 residues long: Crossover junction endodeoxyribonuclease RuvC (172 aa).

Residues Asp-7, Glu-67, and Asp-140 contribute to the active site. Mg(2+)-binding residues include Asp-7, Glu-67, and Asp-140.

The protein belongs to the RuvC family. In terms of assembly, homodimer which binds Holliday junction (HJ) DNA. The HJ becomes 2-fold symmetrical on binding to RuvC with unstacked arms; it has a different conformation from HJ DNA in complex with RuvA. In the full resolvosome a probable DNA-RuvA(4)-RuvB(12)-RuvC(2) complex forms which resolves the HJ. It depends on Mg(2+) as a cofactor.

It localises to the cytoplasm. It catalyses the reaction Endonucleolytic cleavage at a junction such as a reciprocal single-stranded crossover between two homologous DNA duplexes (Holliday junction).. In terms of biological role, the RuvA-RuvB-RuvC complex processes Holliday junction (HJ) DNA during genetic recombination and DNA repair. Endonuclease that resolves HJ intermediates. Cleaves cruciform DNA by making single-stranded nicks across the HJ at symmetrical positions within the homologous arms, yielding a 5'-phosphate and a 3'-hydroxyl group; requires a central core of homology in the junction. The consensus cleavage sequence is 5'-(A/T)TT(C/G)-3'. Cleavage occurs on the 3'-side of the TT dinucleotide at the point of strand exchange. HJ branch migration catalyzed by RuvA-RuvB allows RuvC to scan DNA until it finds its consensus sequence, where it cleaves and resolves the cruciform DNA. In Syntrophomonas wolfei subsp. wolfei (strain DSM 2245B / Goettingen), this protein is Crossover junction endodeoxyribonuclease RuvC.